We begin with the raw amino-acid sequence, 241 residues long: Carboxy-S-adenosyl-L-methionine synthase (241 aa).

S-adenosyl-L-methionine is bound by residues tyrosine 38, 63–65 (GCS), 88–89 (DN), 116–117 (DI), asparagine 131, and arginine 198.

The protein belongs to the class I-like SAM-binding methyltransferase superfamily. Cx-SAM synthase family. As to quaternary structure, homodimer.

It carries out the reaction prephenate + S-adenosyl-L-methionine = carboxy-S-adenosyl-L-methionine + 3-phenylpyruvate + H2O. Catalyzes the conversion of S-adenosyl-L-methionine (SAM) to carboxy-S-adenosyl-L-methionine (Cx-SAM). This is Carboxy-S-adenosyl-L-methionine synthase from Actinobacillus succinogenes (strain ATCC 55618 / DSM 22257 / CCUG 43843 / 130Z).